A 185-amino-acid chain; its full sequence is Elongation factor P (185 aa).

The protein belongs to the elongation factor P family.

The protein resides in the cytoplasm. It functions in the pathway protein biosynthesis; polypeptide chain elongation. In terms of biological role, involved in peptide bond synthesis. Stimulates efficient translation and peptide-bond synthesis on native or reconstituted 70S ribosomes in vitro. Probably functions indirectly by altering the affinity of the ribosome for aminoacyl-tRNA, thus increasing their reactivity as acceptors for peptidyl transferase. This chain is Elongation factor P, found in Caldicellulosiruptor saccharolyticus (strain ATCC 43494 / DSM 8903 / Tp8T 6331).